Reading from the N-terminus, the 270-residue chain is Elongation factor Ts (270 aa).

The tract at residues 81–84 is involved in Mg(2+) ion dislocation from EF-Tu; sequence TDFV.

Belongs to the EF-Ts family.

Its subcellular location is the cytoplasm. Associates with the EF-Tu.GDP complex and induces the exchange of GDP to GTP. It remains bound to the aminoacyl-tRNA.EF-Tu.GTP complex up to the GTP hydrolysis stage on the ribosome. The protein is Elongation factor Ts of Wigglesworthia glossinidia brevipalpis.